Reading from the N-terminus, the 248-residue chain is Cytochrome c oxidase subunit 2 (248 aa).

Topologically, residues 1–39 are mitochondrial intermembrane; it reads MMKELLMNNMLNDVPTPWAMYFQDSATPNMEGIMELHNN. A helical transmembrane segment spans residues 40–56; it reads VVFYLIIMLCFVTYMLY. Residues 57 to 87 are Mitochondrial matrix-facing; the sequence is NISTVYNKSAVAYKYMNHGQFIEMVWTTFPA. A helical transmembrane segment spans residues 88-104; it reads VMLLIMAFPSFMLLYIC. At 105–248 the chain is on the mitochondrial intermembrane side; sequence DEVMAPAMTI…ADFLTWIDEQ (144 aa). Residues histidine 183, cysteine 218, glutamate 220, cysteine 222, histidine 226, and methionine 229 each contribute to the Cu cation site. A Mg(2+)-binding site is contributed by glutamate 220.

It belongs to the cytochrome c oxidase subunit 2 family. In terms of assembly, component of the cytochrome c oxidase (complex IV, CIV), a multisubunit enzyme composed of a catalytic core of 3 subunits and several supernumerary subunits. The complex exists as a monomer or a dimer and forms supercomplexes (SCs) in the inner mitochondrial membrane with ubiquinol-cytochrome c oxidoreductase (cytochrome b-c1 complex, complex III, CIII). Cu cation is required as a cofactor.

It localises to the mitochondrion inner membrane. The catalysed reaction is 4 Fe(II)-[cytochrome c] + O2 + 8 H(+)(in) = 4 Fe(III)-[cytochrome c] + 2 H2O + 4 H(+)(out). Functionally, component of the cytochrome c oxidase, the last enzyme in the mitochondrial electron transport chain which drives oxidative phosphorylation. The respiratory chain contains 3 multisubunit complexes succinate dehydrogenase (complex II, CII), ubiquinol-cytochrome c oxidoreductase (cytochrome b-c1 complex, complex III, CIII) and cytochrome c oxidase (complex IV, CIV), that cooperate to transfer electrons derived from NADH and succinate to molecular oxygen, creating an electrochemical gradient over the inner membrane that drives transmembrane transport and the ATP synthase. Cytochrome c oxidase is the component of the respiratory chain that catalyzes the reduction of oxygen to water. Electrons originating from reduced cytochrome c in the intermembrane space (IMS) are transferred via the dinuclear copper A center (CU(A)) of subunit 2 and heme A of subunit 1 to the active site in subunit 1, a binuclear center (BNC) formed by heme A3 and copper B (CU(B)). The BNC reduces molecular oxygen to 2 water molecules using 4 electrons from cytochrome c in the IMS and 4 protons from the mitochondrial matrix. This is Cytochrome c oxidase subunit 2 (COX2) from Brettanomyces naardenensis (Yeast).